The sequence spans 467 residues: Ribulose bisphosphate carboxylase large chain (467 aa).

N6,N6,N6-trimethyllysine is present on lysine 5. The substrate site is built by asparagine 114 and threonine 164. The active-site Proton acceptor is the lysine 166. A substrate-binding site is contributed by lysine 168. Lysine 192, aspartate 194, and glutamate 195 together coordinate Mg(2+). Lysine 192 bears the N6-carboxylysine mark. Histidine 285 (proton acceptor) is an active-site residue. 3 residues coordinate substrate: arginine 286, histidine 318, and serine 370.

It belongs to the RuBisCO large chain family. Type I subfamily. Heterohexadecamer of 8 large chains and 8 small chains; disulfide-linked. The disulfide link is formed within the large subunit homodimers. Mg(2+) is required as a cofactor. Post-translationally, the disulfide bond which can form in the large chain dimeric partners within the hexadecamer appears to be associated with oxidative stress and protein turnover.

The protein localises to the plastid. It is found in the chloroplast. The enzyme catalyses 2 (2R)-3-phosphoglycerate + 2 H(+) = D-ribulose 1,5-bisphosphate + CO2 + H2O. It catalyses the reaction D-ribulose 1,5-bisphosphate + O2 = 2-phosphoglycolate + (2R)-3-phosphoglycerate + 2 H(+). Its function is as follows. RuBisCO catalyzes two reactions: the carboxylation of D-ribulose 1,5-bisphosphate, the primary event in carbon dioxide fixation, as well as the oxidative fragmentation of the pentose substrate in the photorespiration process. Both reactions occur simultaneously and in competition at the same active site. The sequence is that of Ribulose bisphosphate carboxylase large chain from Jasminum simplicifolium subsp. suavissimum (Native jasmine).